The primary structure comprises 114 residues: Large ribosomal subunit protein bL19 (114 aa).

This sequence belongs to the bacterial ribosomal protein bL19 family.

Functionally, this protein is located at the 30S-50S ribosomal subunit interface and may play a role in the structure and function of the aminoacyl-tRNA binding site. The polypeptide is Large ribosomal subunit protein bL19 (Clavibacter michiganensis subsp. michiganensis (strain NCPPB 382)).